The following is a 336-amino-acid chain: Formimidoylglutamase (336 aa).

Residues H129, D160, H162, D164, D257, and D259 each contribute to the Mn(2+) site.

This sequence belongs to the arginase family. The cofactor is Mn(2+).

The enzyme catalyses N-formimidoyl-L-glutamate + H2O = formamide + L-glutamate. Its pathway is amino-acid degradation; L-histidine degradation into L-glutamate; L-glutamate from N-formimidoyl-L-glutamate (hydrolase route): step 1/1. Its function is as follows. Catalyzes the conversion of N-formimidoyl-L-glutamate to L-glutamate and formamide. The chain is Formimidoylglutamase from Vibrio vulnificus (strain YJ016).